We begin with the raw amino-acid sequence, 335 residues long: GTPase Obg (335 aa).

An Obg domain is found at 1–159; sequence MQFIDRSEIE…RKLLLELKLL (159 aa). An OBG-type G domain is found at 160–328; that stretch reads AEVGIIGLPN…LLARVWQVLE (169 aa). Residues 166 to 173, 191 to 195, 213 to 216, 280 to 283, and 309 to 311 each bind GTP; these read GLPNAGKS, FTTLV, DIPG, NKAD, and SAA. Ser173 and Thr193 together coordinate Mg(2+).

It belongs to the TRAFAC class OBG-HflX-like GTPase superfamily. OBG GTPase family. As to quaternary structure, monomer. Mg(2+) serves as cofactor.

The protein resides in the cytoplasm. Functionally, an essential GTPase which binds GTP, GDP and possibly (p)ppGpp with moderate affinity, with high nucleotide exchange rates and a fairly low GTP hydrolysis rate. Plays a role in control of the cell cycle, stress response, ribosome biogenesis and in those bacteria that undergo differentiation, in morphogenesis control. This is GTPase Obg from Gloeobacter violaceus (strain ATCC 29082 / PCC 7421).